Reading from the N-terminus, the 254-residue chain is Imidazole glycerol phosphate synthase subunit HisF (254 aa).

Active-site residues include D11 and D130.

This sequence belongs to the HisA/HisF family. In terms of assembly, heterodimer of HisH and HisF.

The protein localises to the cytoplasm. It carries out the reaction 5-[(5-phospho-1-deoxy-D-ribulos-1-ylimino)methylamino]-1-(5-phospho-beta-D-ribosyl)imidazole-4-carboxamide + L-glutamine = D-erythro-1-(imidazol-4-yl)glycerol 3-phosphate + 5-amino-1-(5-phospho-beta-D-ribosyl)imidazole-4-carboxamide + L-glutamate + H(+). Its pathway is amino-acid biosynthesis; L-histidine biosynthesis; L-histidine from 5-phospho-alpha-D-ribose 1-diphosphate: step 5/9. IGPS catalyzes the conversion of PRFAR and glutamine to IGP, AICAR and glutamate. The HisF subunit catalyzes the cyclization activity that produces IGP and AICAR from PRFAR using the ammonia provided by the HisH subunit. The chain is Imidazole glycerol phosphate synthase subunit HisF from Acidiphilium cryptum (strain JF-5).